The chain runs to 62 residues: MLDFLPVDSPSNVNRCAPHLSSLCPSSVKDRAPHLSVVAPLKCQYRRALIPRLVHIICGKLA.

This is an uncharacterized protein from Escherichia coli.